Reading from the N-terminus, the 382-residue chain is Dual-specificity RNA methyltransferase RlmN (382 aa).

The Proton acceptor role is filled by Glu-96. The Radical SAM core domain occupies 102–342 (QGKRGTLCVS…VRTTRGEDID (241 aa)). Residues Cys-109 and Cys-345 are joined by a disulfide bond. [4Fe-4S] cluster-binding residues include Cys-116, Cys-120, and Cys-123. Residues 170-171 (GE), Ser-202, 224-226 (SLH), and Asn-302 each bind S-adenosyl-L-methionine. The active-site S-methylcysteine intermediate is Cys-345.

This sequence belongs to the radical SAM superfamily. RlmN family. [4Fe-4S] cluster serves as cofactor.

The protein localises to the cytoplasm. It carries out the reaction adenosine(2503) in 23S rRNA + 2 reduced [2Fe-2S]-[ferredoxin] + 2 S-adenosyl-L-methionine = 2-methyladenosine(2503) in 23S rRNA + 5'-deoxyadenosine + L-methionine + 2 oxidized [2Fe-2S]-[ferredoxin] + S-adenosyl-L-homocysteine. It catalyses the reaction adenosine(37) in tRNA + 2 reduced [2Fe-2S]-[ferredoxin] + 2 S-adenosyl-L-methionine = 2-methyladenosine(37) in tRNA + 5'-deoxyadenosine + L-methionine + 2 oxidized [2Fe-2S]-[ferredoxin] + S-adenosyl-L-homocysteine. Its function is as follows. Specifically methylates position 2 of adenine 2503 in 23S rRNA and position 2 of adenine 37 in tRNAs. m2A2503 modification seems to play a crucial role in the proofreading step occurring at the peptidyl transferase center and thus would serve to optimize ribosomal fidelity. In Pseudomonas savastanoi pv. phaseolicola (strain 1448A / Race 6) (Pseudomonas syringae pv. phaseolicola (strain 1448A / Race 6)), this protein is Dual-specificity RNA methyltransferase RlmN.